A 125-amino-acid polypeptide reads, in one-letter code: Actin, alpha skeletal muscle (125 aa).

It belongs to the actin family. As to quaternary structure, polymerization of globular actin (G-actin) leads to a structural filament (F-actin) in the form of a two-stranded helix. Each actin can bind to 4 others. Post-translationally, methylated at His-75 by SETD3.

It localises to the cytoplasm. It is found in the cytoskeleton. Its function is as follows. Actins are highly conserved proteins that are involved in various types of cell motility and are ubiquitously expressed in all eukaryotic cells. The chain is Actin, alpha skeletal muscle from Pleurodeles waltl (Iberian ribbed newt).